Reading from the N-terminus, the 549-residue chain is Cytoplasmic trehalase (549 aa).

Substrate contacts are provided by residues Arg168, 175–176, Asn212, 221–223, 292–294, and Gly324; these read WD, RSQ, and RDE. Residues Asp326 and Glu509 each act as proton donor/acceptor in the active site. Glu525 is a binding site for substrate.

It belongs to the glycosyl hydrolase 37 family. Monomer.

Its subcellular location is the cytoplasm. The catalysed reaction is alpha,alpha-trehalose + H2O = alpha-D-glucose + beta-D-glucose. It participates in glycan degradation; trehalose degradation; D-glucose from alpha,alpha-trehalose: step 1/1. Its function is as follows. Hydrolyzes trehalose to glucose. Could be involved, in cells returning to low osmolarity conditions, in the utilization of the accumulated cytoplasmic trehalose, which was synthesized in response to high osmolarity. The chain is Cytoplasmic trehalase from Shigella boydii serotype 4 (strain Sb227).